A 246-amino-acid polypeptide reads, in one-letter code: Proteasome subunit alpha type-6 (246 aa).

Belongs to the peptidase T1A family. The 26S proteasome consists of a 20S proteasome core and two 19S regulatory subunits. The 20S proteasome core is composed of 28 subunits that are arranged in four stacked rings, resulting in a barrel-shaped structure. The two end rings are each formed by seven alpha subunits, and the two central rings are each formed by seven beta subunits. The catalytic chamber with the active sites is on the inside of the barrel.

The protein resides in the cytoplasm. It is found in the nucleus. The proteasome is a multicatalytic proteinase complex which is characterized by its ability to cleave peptides with Arg, Phe, Tyr, Leu, and Glu adjacent to the leaving group at neutral or slightly basic pH. The proteasome has an ATP-dependent proteolytic activity. This chain is Proteasome subunit alpha type-6 (PAA1), found in Oryza sativa subsp. japonica (Rice).